Reading from the N-terminus, the 105-residue chain is Cysteine-rich venom protein VAR2 (105 aa).

Residues 1-22 (MILLKLYLTLAAILCQSRGTTS) form the signal peptide.

Belongs to the CRISP family. Contains 8 disulfide bonds. As to expression, expressed by the venom gland.

The protein resides in the secreted. Functionally, blocks ryanodine receptors, and potassium channels. This chain is Cysteine-rich venom protein VAR2, found in Varanus acanthurus (Ridge-tailed monitor).